The primary structure comprises 323 residues: Elongation factor P--(R)-beta-lysine ligase (323 aa).

74-76 (SPE) contributes to the substrate binding site. Residues 98–100 (RNE) and N107 each bind ATP. Y116 contacts substrate. 242 to 243 (EL) is an ATP binding site. Residue E249 coordinates substrate. An ATP-binding site is contributed by G298.

It belongs to the class-II aminoacyl-tRNA synthetase family. EpmA subfamily. As to quaternary structure, homodimer.

The catalysed reaction is D-beta-lysine + L-lysyl-[protein] + ATP = N(6)-((3R)-3,6-diaminohexanoyl)-L-lysyl-[protein] + AMP + diphosphate + H(+). In terms of biological role, with EpmB is involved in the beta-lysylation step of the post-translational modification of translation elongation factor P (EF-P). Catalyzes the ATP-dependent activation of (R)-beta-lysine produced by EpmB, forming a lysyl-adenylate, from which the beta-lysyl moiety is then transferred to the epsilon-amino group of a conserved specific lysine residue in EF-P. This chain is Elongation factor P--(R)-beta-lysine ligase, found in Vibrio vulnificus (strain YJ016).